A 1863-amino-acid polypeptide reads, in one-letter code: Breast cancer type 1 susceptibility protein (1863 aa).

Met1 is modified (N-acetylmethionine). The segment at 24 to 65 (CPICLELIKEPVSTKCDHIFCKFCMLKLLNQKKGPSQCPLCK) adopts an RING-type zinc-finger fold. A Glycyl lysine isopeptide (Lys-Gly) (interchain with G-Cter in SUMO2) cross-link involves residue Lys109. The residue at position 114 (Ser114) is a Phosphoserine. The interval 230–270 (ETDVTNTEHHQPSNNDLNTTEKRAAERHPEKYQGSSVSNLH) is disordered. A compositionally biased stretch (basic and acidic residues) spans 248-260 (TTEKRAAERHPEK). Lys301 participates in a covalent cross-link: Glycyl lysine isopeptide (Lys-Gly) (interchain with G-Cter in SUMO2). The segment at 306–338 (NKSKQPGLARSQHNRWAGSKETCNDRRTPSTEK) is disordered. Residues 327 to 338 (TCNDRRTPSTEK) show a composition bias toward basic and acidic residues. Lys339 is covalently cross-linked (Glycyl lysine isopeptide (Lys-Gly) (interchain with G-Cter in SUMO2)). Phosphoserine occurs at positions 395, 398, 423, and 434. Residues Lys443, Lys459, and Lys519 each participate in a glycyl lysine isopeptide (Lys-Gly) (interchain with G-Cter in SUMO2) cross-link. Positions 534 to 544 (QGTNQTEQNGQ) are enriched in low complexity. Residues 534–570 (QGTNQTEQNGQVMNITNSGHENKTKGDSIQNEKNPNP) are disordered. Ser551 is subject to Phosphoserine. Glycyl lysine isopeptide (Lys-Gly) (interchain with G-Cter in SUMO2) cross-links involve residues Lys583 and Lys654. The disordered stretch occupies residues 654–709 (KYNQMPVRHSRNLQLMEGKEPATGAKKSNKPNEQTSKRHDSDTFPELKLTNAPGSF). Phosphoserine is present on residues Ser694, Ser708, and Ser725. Glycyl lysine isopeptide (Lys-Gly) (interchain with G-Cter in SUMO2) cross-links involve residues Lys734 and Lys739. Phosphoserine is present on residues Ser753 and Ser840. Residues Lys918 and Lys987 each participate in a glycyl lysine isopeptide (Lys-Gly) (interchain with G-Cter in SUMO2) cross-link. At Ser988 the chain carries Phosphoserine; by CHEK2. Ser1009 bears the Phosphoserine mark. Residue Lys1079 forms a Glycyl lysine isopeptide (Lys-Gly) (interchain with G-Cter in SUMO2) linkage. At Ser1143 the chain carries Phosphoserine; by ATR; in vitro. Positions 1181-1216 (VQKGELSRSPSPFTHTHLAQGYRRGAKKLESSEENL) are disordered. Ser1189, Ser1191, Ser1211, Ser1217, and Ser1218 each carry phosphoserine. At Ser1280 the chain carries Phosphoserine; by ATR; in vitro. The segment at 1322 to 1387 (KQMRHQSESQ…VSEDCSGLSS (66 aa)) is disordered. 3 positions are modified to phosphoserine: Ser1328, Ser1336, and Ser1342. Positions 1373–1387 (ESETSVSEDCSGLSS) are enriched in polar residues. Ser1387 carries the post-translational modification Phosphoserine; by ATM and ATR. Thr1394 carries the phosphothreonine; by ATR; in vitro modification. The interaction with PALB2 stretch occupies residues 1397–1424 (RDTMQHNLIKLQQEMAELEAVLEQHGSQ). The residue at position 1423 (Ser1423) is a Phosphoserine; by ATM and ATR. Residues 1440–1505 (EDLRNPEQST…SSPSKCPSLD (66 aa)) are disordered. The span at 1445–1470 (PEQSTSEKAVLTSQKSSEYPISQNPE) shows a compositional bias: polar residues. Phosphoserine; by ATR; in vitro is present on Ser1457. Ser1524 carries the phosphoserine; by ATM modification. At Ser1542 the chain carries Phosphoserine. The segment at 1565-1596 (ESGISLFSDDPESDPSEDRAPESARVGNIPSS) is disordered. BRCT domains lie at 1642–1736 (STER…DFEV) and 1756–1855 (QDRK…TYLI).

Heterodimer with BARD1. Part of the BRCA1-associated genome surveillance complex (BASC), which contains BRCA1, MSH2, MSH6, MLH1, ATM, BLM, PMS2 and the MRE11-RAD50-NBN protein (MRN) complex. This association could be a dynamic process changing throughout the cell cycle and within subnuclear domains. Component of the BRCA1-A complex, at least composed of BRCA1, BARD1, UIMC1/RAP80, ABRAXAS1, BRCC3/BRCC36, BABAM2 and BABAM1/NBA1. Interacts (via the BRCT domains) with ABRAXAS1 (phosphorylated form); this is important for recruitment to sites of DNA damage. Can form a heterotetramer with two molecules of ABRAXAS1 (phosphorylated form). Component of the BRCA1-RBBP8 complex. Interacts (via the BRCT domains) with RBBP8 ('Ser-327' phosphorylated form); the interaction ubiquitinates RBBP8, regulates CHEK1 activation, and involves RBBP8 in BRCA1-dependent G2/M checkpoint control on DNA damage. Associates with RNA polymerase II holoenzyme. Interacts with SMC1A, NELFB, DCLRE1C, CLSPN. Interacts with CHEK1, CHEK2, BAP1, BRCC3, UBXN1 and PCLAF. Interacts (via BRCT domains) with BRIP1 (phosphorylated form). Interacts with FANCD2 (ubiquitinated form). Interacts with H2AX (phosphorylated on 'Ser-140'). Interacts (via the BRCT domains) with ACACA (phosphorylated form); the interaction prevents dephosphorylation of ACACA. Part of a BRCA complex containing BRCA1, BRCA2 and PALB2. Interacts directly with PALB2; the interaction is essential for its function in HRR. Interacts directly with BRCA2; the interaction occurs only in the presence of PALB2 which serves as the bridging protein. Interacts (via the BRCT domains) with LMO4; the interaction represses the transcriptional activity of BRCA1. Interacts (via the BRCT domains) with CCAR2 (via N-terminus); the interaction represses the transcriptional activator activity of BRCA1. Interacts with EXD2. Interacts (via C-terminus) with DHX9; this interaction is direct and links BRCA1 to the RNA polymerase II holoenzyme. Interacts with DNA helicase ZGRF1; the interaction is increased following DNA damage induction. In terms of processing, phosphorylated in response to IR, UV, and various stimuli that cause checkpoint activation, probably by ATM or ATR. Phosphorylation at Ser-988 by CHEK2 regulates mitotic spindle assembly. Phosphorylation by AURKA regulates centrosomal microtubule nucleation. Autoubiquitinated, undergoes 'Lys-6'-linked polyubiquitination. 'Lys-6'-linked polyubiquitination does not promote degradation. As to expression, isoform 1 and isoform 3 are widely expressed. Isoform 3 is reduced or absent in several breast and ovarian cancer cell lines.

Its subcellular location is the nucleus. It localises to the chromosome. The protein resides in the cytoplasm. The enzyme catalyses S-ubiquitinyl-[E2 ubiquitin-conjugating enzyme]-L-cysteine + [acceptor protein]-L-lysine = [E2 ubiquitin-conjugating enzyme]-L-cysteine + N(6)-ubiquitinyl-[acceptor protein]-L-lysine.. It participates in protein modification; protein ubiquitination. With respect to regulation, the E3 ubiquitin-protein ligase activity is inhibited by phosphorylation by AURKA. Activity is increased by phosphatase treatment. E3 ubiquitin-protein ligase that specifically mediates the formation of 'Lys-6'-linked polyubiquitin chains and plays a central role in DNA repair by facilitating cellular responses to DNA damage. It is unclear whether it also mediates the formation of other types of polyubiquitin chains. The BRCA1-BARD1 heterodimer coordinates a diverse range of cellular pathways such as DNA damage repair, ubiquitination and transcriptional regulation to maintain genomic stability. Regulates centrosomal microtubule nucleation. Required for appropriate cell cycle arrests after ionizing irradiation in both the S-phase and the G2 phase of the cell cycle. Required for FANCD2 targeting to sites of DNA damage. Inhibits lipid synthesis by binding to inactive phosphorylated ACACA and preventing its dephosphorylation. Contributes to homologous recombination repair (HRR) via its direct interaction with PALB2, fine-tunes recombinational repair partly through its modulatory role in the PALB2-dependent loading of BRCA2-RAD51 repair machinery at DNA breaks. Component of the BRCA1-RBBP8 complex which regulates CHEK1 activation and controls cell cycle G2/M checkpoints on DNA damage via BRCA1-mediated ubiquitination of RBBP8. Acts as a transcriptional activator. In Homo sapiens (Human), this protein is Breast cancer type 1 susceptibility protein (BRCA1).